The sequence spans 366 residues: Chorismate synthase (366 aa).

Positions 48 and 54 each coordinate NADP(+). Residues 125–127 (RSS), 238–239 (NA), G278, 293–297 (KPTSS), and R319 each bind FMN.

The protein belongs to the chorismate synthase family. Homotetramer. FMNH2 is required as a cofactor.

It carries out the reaction 5-O-(1-carboxyvinyl)-3-phosphoshikimate = chorismate + phosphate. The protein operates within metabolic intermediate biosynthesis; chorismate biosynthesis; chorismate from D-erythrose 4-phosphate and phosphoenolpyruvate: step 7/7. In terms of biological role, catalyzes the anti-1,4-elimination of the C-3 phosphate and the C-6 proR hydrogen from 5-enolpyruvylshikimate-3-phosphate (EPSP) to yield chorismate, which is the branch point compound that serves as the starting substrate for the three terminal pathways of aromatic amino acid biosynthesis. This reaction introduces a second double bond into the aromatic ring system. This chain is Chorismate synthase, found in Burkholderia orbicola (strain MC0-3).